A 199-amino-acid polypeptide reads, in one-letter code: NAD(P)H dehydrogenase (quinone) (199 aa).

Positions Val4–Val190 constitute a Flavodoxin-like domain. FMN is bound by residues Ser10–Ile15 and Thr78–Tyr80. Tyr12 contributes to the NAD(+) binding site. Trp98 is a substrate binding site. Residues Ser113–Gly119 and His134 each bind FMN.

It belongs to the WrbA family. Requires FMN as cofactor.

The enzyme catalyses a quinone + NADH + H(+) = a quinol + NAD(+). It carries out the reaction a quinone + NADPH + H(+) = a quinol + NADP(+). The chain is NAD(P)H dehydrogenase (quinone) from Methylobacterium sp. (strain 4-46).